The sequence spans 177 residues: FMRFamide-related peptides (177 aa).

The N-terminal stretch at 1-21 (MNHPRSIAMLAALWLVVSVTS) is a signal peptide. Residues 22–32 (TPVRRSPDLEA) constitute a propeptide that is removed on maturation. Phenylalanine amide is present on F45. Positions 47–93 (RSTLPVVPPAQPSFLQRYSAPQPAALTADDLMTFLRAYEEDYSSPVS) are excised as a propeptide. Residues F102 and F111 each carry the phenylalanine amide modification. Positions 113–131 (RSVDEENSGYQAETNTYPQ) are excised as a propeptide. L143 carries the post-translational modification Leucine amide. A propeptide spanning residues 145-177 (RDNELSESNDEDRYEVESERTKRSVVDPCNDCA) is cleaved from the precursor. Residues 145-177 (RDNELSESNDEDRYEVESERTKRSVVDPCNDCA) form a disordered region. A compositionally biased stretch (acidic residues) spans 149–158 (LSESNDEDRY). Residues 159–169 (EVESERTKRSV) are compositionally biased toward basic and acidic residues.

Belongs to the FARP (FMRFamide related peptide) family. In terms of tissue distribution, only expressed in the CNS and predominantly in the thoracic ganglia. Strongest expression is seen in two pairs of large neurons in each thoracic ganglion. These neurons are ventrolateral neurosecretory cells 1 and 2, they project their axons through transverse nerves into the periphery where axons from the prothoracic ganglion innervate the prothoracic gland.

Its subcellular location is the secreted. In terms of biological role, regulates ecdysteroidogenesis by direct innervation of the prothoracic gland by reducing cAMP production via the receptor for myosuppressin. The neurons that innervate the prothoracic gland during the fifth instar are most active during days 0-4, after which they reduce and then peak again on day 6. Expression suppresses the biosynthesis of steroid hormones called ecdysteroids that elicit molting and metamorphosis. This chain is FMRFamide-related peptides, found in Bombyx mori (Silk moth).